The chain runs to 412 residues: Adipocyte plasma membrane-associated protein (412 aa).

The interval 1-32 (MTEADGLRQRRPLRPQVVTDDNRTPEAKGGSS) is disordered. Over 1 to 39 (MTEADGLRQRRPLRPQVVTDDNRTPEAKGGSSFSGRVFR) the chain is Cytoplasmic. T19 is subject to Phosphothreonine. A helical membrane pass occupies residues 40–60 (ATFLMLAAFLTIPLLGALVLL). The Extracellular segment spans residues 61–412 (DSPIDPEPLS…RAPYLCRLRL (352 aa)). Residue N159 is glycosylated (N-linked (GlcNAc...) asparagine).

Belongs to the strictosidine synthase family.

It is found in the membrane. Its function is as follows. Exhibits strong arylesterase activity with beta-naphthyl acetate and phenyl acetate. May play a role in adipocyte differentiation. The polypeptide is Adipocyte plasma membrane-associated protein (APMAP) (Bos taurus (Bovine)).